The following is a 402-amino-acid chain: Tyrosine--tRNA ligase (402 aa).

The 'HIGH' region motif lies at 47–56; it reads PTAPDLHLGH. The 'KMSKS' region motif lies at 232–236; that stretch reads KMSKS. Lys-235 provides a ligand contact to ATP. An S4 RNA-binding domain is found at 341–401; it reads VGVLDVLKQI…GKKRFMKLNI (61 aa).

This sequence belongs to the class-I aminoacyl-tRNA synthetase family. TyrS type 2 subfamily. Homodimer.

The protein localises to the cytoplasm. The enzyme catalyses tRNA(Tyr) + L-tyrosine + ATP = L-tyrosyl-tRNA(Tyr) + AMP + diphosphate + H(+). Functionally, catalyzes the attachment of tyrosine to tRNA(Tyr) in a two-step reaction: tyrosine is first activated by ATP to form Tyr-AMP and then transferred to the acceptor end of tRNA(Tyr). The polypeptide is Tyrosine--tRNA ligase (Helicobacter pylori (strain J99 / ATCC 700824) (Campylobacter pylori J99)).